We begin with the raw amino-acid sequence, 247 residues long: Cytochrome c oxidase subunit 2 (247 aa).

Positions 1-11 (MLLIINNIINN) are cleaved as a signal peptide. Over 12 to 38 (DVPTPWGVYFQDSATPNHEGIIELHDN) the chain is Mitochondrial intermembrane. A helical membrane pass occupies residues 39–59 (IMFYLVLILCLVSWLLFSIVK). Topologically, residues 60–78 (DGSKNPLPHKYLVHGQTIE) are mitochondrial matrix. Residues 79-101 (IIWTILPALVLLVIAFPSFILLY) traverse the membrane as a helical segment. Topologically, residues 102-247 (LCDEVISPAM…KEFLTWLNEQ (146 aa)) are mitochondrial intermembrane. Positions 182, 217, 219, 221, 225, and 228 each coordinate Cu cation. E219 provides a ligand contact to Mg(2+).

The protein belongs to the cytochrome c oxidase subunit 2 family. Component of the cytochrome c oxidase (complex IV, CIV), a multisubunit enzyme composed of a catalytic core of 3 subunits and several supernumerary subunits. The complex exists as a monomer or a dimer and forms supercomplexes (SCs) in the inner mitochondrial membrane with ubiquinol-cytochrome c oxidoreductase (cytochrome b-c1 complex, complex III, CIII). The cofactor is Cu cation. In terms of processing, the signal sequence of COX2 is processed by IMP1.

Its subcellular location is the mitochondrion inner membrane. It catalyses the reaction 4 Fe(II)-[cytochrome c] + O2 + 8 H(+)(in) = 4 Fe(III)-[cytochrome c] + 2 H2O + 4 H(+)(out). Component of the cytochrome c oxidase, the last enzyme in the mitochondrial electron transport chain which drives oxidative phosphorylation. The respiratory chain contains 3 multisubunit complexes succinate dehydrogenase (complex II, CII), ubiquinol-cytochrome c oxidoreductase (cytochrome b-c1 complex, complex III, CIII) and cytochrome c oxidase (complex IV, CIV), that cooperate to transfer electrons derived from NADH and succinate to molecular oxygen, creating an electrochemical gradient over the inner membrane that drives transmembrane transport and the ATP synthase. Cytochrome c oxidase is the component of the respiratory chain that catalyzes the reduction of oxygen to water. Electrons originating from reduced cytochrome c in the intermembrane space (IMS) are transferred via the dinuclear copper A center (CU(A)) of subunit 2 and heme A of subunit 1 to the active site in subunit 1, a binuclear center (BNC) formed by heme A3 and copper B (CU(B)). The BNC reduces molecular oxygen to 2 water molecules using 4 electrons from cytochrome c in the IMS and 4 protons from the mitochondrial matrix. This Wickerhamomyces canadensis (Yeast) protein is Cytochrome c oxidase subunit 2 (COX2).